A 195-amino-acid chain; its full sequence is Inhibitor of glycogen debranching 1 (195 aa).

Over residues methionine 1–glutamate 18 the composition is skewed to polar residues. A disordered region spans residues methionine 1–phenylalanine 101. Serine 64 bears the Phosphoserine mark. Threonine 65 carries the post-translational modification Phosphothreonine. Residues glutamate 75 to serine 95 are compositionally biased toward basic and acidic residues. Phosphoserine is present on residues serine 95 and serine 96. Position 132 is a phosphothreonine (threonine 132). The interval asparagine 146–serine 175 is disordered. Residues tyrosine 148–serine 157 show a composition bias toward polar residues. The residue at position 164 (serine 164) is a Phosphoserine.

Interacts with GDB1.

Its subcellular location is the cytoplasm. Its function is as follows. Acts as an inhibitor of GDB1, enhancing the ability of cells to store glucose as glycogen. The chain is Inhibitor of glycogen debranching 1 (IGD1) from Saccharomyces cerevisiae (strain ATCC 204508 / S288c) (Baker's yeast).